Here is a 449-residue protein sequence, read N- to C-terminus: Wilms tumor protein (449 aa).

Residues 48–84 (YGSLGGPAPPPAPPPPPPPPPHSFIKQEPSWGGAEPH) are disordered. A compositionally biased stretch (pro residues) spans 54–69 (PAPPPAPPPPPPPPPH). Glycyl lysine isopeptide (Lys-Gly) (interchain with G-Cter in SUMO) cross-links involve residues Lys-73 and Lys-177. The 9aaTAD motif lies at 236-244 (MTWNQMNLG). 3 C2H2-type zinc fingers span residues 323-347 (FMCA…SRKH), 353-377 (YQCD…QRRH), and 383-405 (FQCK…TRTH). Important for interaction with target DNA regions lie at residues 367–381 (SDQL…TGVK) and 393–401 (SRSDHLKTH). Residues 408–410 (KTS) carry the KTS motif motif. The C2H2-type 4 zinc finger occupies 414 to 438 (FSCRWPSCQKKFARSDELVRHHNMH). Lys-444 is covalently cross-linked (Glycyl lysine isopeptide (Lys-Gly) (interchain with G-Cter in SUMO2)).

The protein belongs to the EGR C2H2-type zinc-finger protein family. In terms of assembly, homodimer. Interacts with WTIP. Interacts with actively translating polysomes. Detected in nuclear ribonucleoprotein (mRNP) particles. Interacts with HNRNPU via the zinc-finger region. Interacts with U2AF2. Interacts with CITED2. Interacts with ZNF224 via the zinc-finger region. Interacts with WTAP and SRY. Interacts with AMER1. Interacts with RBM4. Expressed in the kidney and a subset of hematopoietic cells.

It localises to the nucleus. The protein resides in the nucleolus. The protein localises to the cytoplasm. It is found in the nucleus speckle. Its subcellular location is the nucleoplasm. Functionally, transcription factor that plays an important role in cellular development and cell survival. Recognizes and binds to the DNA sequence 5'-GCG(T/G)GGGCG-3'. Regulates the expression of numerous target genes, including EPO. Plays an essential role for development of the urogenital system. It has a tumor suppressor as well as an oncogenic role in tumor formation. Function may be isoform-specific: isoforms lacking the KTS motif may act as transcription factors. Isoforms containing the KTS motif may bind mRNA and play a role in mRNA metabolism or splicing. Isoform 1 has lower affinity for DNA, and can bind RNA. The protein is Wilms tumor protein (WT1) of Homo sapiens (Human).